A 266-amino-acid polypeptide reads, in one-letter code: MLTYPQIDPVALAIGPLKIHWYGLMYLIGIGGAWLLASRRMKRFDPTWTKERLSDLVFWVACGVILGGRLGYVLFYNLDEYIANPTLIFEVWKGGMSFHGGLLGVMLAVWWFGKRHGKSFFQLMDFIAPLVPIGLGAGRIGNFINSELWGKVSDVPWAMVFPNGGPLPRHPSQLYQFALEGVALFVILWLFTRKPRPTASVSGLFVLCYGIFRFVVEFVRVPDAQLGYLAWGWLTMGQVLCVPMVLAGIALMVWAYRRDAAQPKAA.

7 helical membrane passes run 10 to 30 (VALAIGPLKIHWYGLMYLIGI), 56 to 76 (LVFWVACGVILGGRLGYVLFY), 92 to 112 (WKGGMSFHGGLLGVMLAVWWF), 120 to 140 (FFQLMDFIAPLVPIGLGAGRI), 171 to 191 (PSQLYQFALEGVALFVILWLF), 199 to 219 (ASVSGLFVLCYGIFRFVVEFV), and 233 to 253 (WLTMGQVLCVPMVLAGIALMV). R139 contacts a 1,2-diacyl-sn-glycero-3-phospho-(1'-sn-glycerol).

This sequence belongs to the Lgt family.

The protein resides in the cell inner membrane. The enzyme catalyses L-cysteinyl-[prolipoprotein] + a 1,2-diacyl-sn-glycero-3-phospho-(1'-sn-glycerol) = an S-1,2-diacyl-sn-glyceryl-L-cysteinyl-[prolipoprotein] + sn-glycerol 1-phosphate + H(+). It participates in protein modification; lipoprotein biosynthesis (diacylglyceryl transfer). In terms of biological role, catalyzes the transfer of the diacylglyceryl group from phosphatidylglycerol to the sulfhydryl group of the N-terminal cysteine of a prolipoprotein, the first step in the formation of mature lipoproteins. The protein is Phosphatidylglycerol--prolipoprotein diacylglyceryl transferase of Pseudomonas aeruginosa (strain LESB58).